The sequence spans 720 residues: Glycine--tRNA ligase beta subunit (720 aa).

The protein belongs to the class-II aminoacyl-tRNA synthetase family. In terms of assembly, tetramer of two alpha and two beta subunits.

The protein resides in the cytoplasm. It catalyses the reaction tRNA(Gly) + glycine + ATP = glycyl-tRNA(Gly) + AMP + diphosphate. This is Glycine--tRNA ligase beta subunit from Acidovorax ebreus (strain TPSY) (Diaphorobacter sp. (strain TPSY)).